Consider the following 341-residue polypeptide: S-adenosylmethionine:tRNA ribosyltransferase-isomerase (341 aa).

The protein belongs to the QueA family. As to quaternary structure, monomer.

It localises to the cytoplasm. The catalysed reaction is 7-aminomethyl-7-carbaguanosine(34) in tRNA + S-adenosyl-L-methionine = epoxyqueuosine(34) in tRNA + adenine + L-methionine + 2 H(+). It functions in the pathway tRNA modification; tRNA-queuosine biosynthesis. Its function is as follows. Transfers and isomerizes the ribose moiety from AdoMet to the 7-aminomethyl group of 7-deazaguanine (preQ1-tRNA) to give epoxyqueuosine (oQ-tRNA). In Clostridium botulinum (strain Kyoto / Type A2), this protein is S-adenosylmethionine:tRNA ribosyltransferase-isomerase.